The following is a 156-amino-acid chain: Small ribosomal subunit protein uS7A/uS7B (156 aa).

Belongs to the universal ribosomal protein uS7 family. As to quaternary structure, part of the 30S ribosomal subunit. Contacts proteins S9 and S11.

One of the primary rRNA binding proteins, it binds directly to 16S rRNA where it nucleates assembly of the head domain of the 30S subunit. Is located at the subunit interface close to the decoding center, probably blocks exit of the E-site tRNA. This chain is Small ribosomal subunit protein uS7A/uS7B, found in Cereibacter sphaeroides (strain ATCC 17029 / ATH 2.4.9) (Rhodobacter sphaeroides).